A 135-amino-acid chain; its full sequence is Large ribosomal subunit protein bL21 (135 aa).

Over residues 109 to 128 the composition is skewed to polar residues; it reads TLATAQSAPPSTSEATTDTT. A disordered region spans residues 109-135; that stretch reads TLATAQSAPPSTSEATTDTTGIPAAEE.

The protein belongs to the bacterial ribosomal protein bL21 family. As to quaternary structure, part of the 50S ribosomal subunit. Contacts protein L20.

In terms of biological role, this protein binds to 23S rRNA in the presence of protein L20. The polypeptide is Large ribosomal subunit protein bL21 (Synechococcus sp. (strain JA-3-3Ab) (Cyanobacteria bacterium Yellowstone A-Prime)).